The sequence spans 166 residues: Disulfide bond formation protein B (166 aa).

The Cytoplasmic portion of the chain corresponds to 1 to 11 (MIALPRNRRPL). The helical transmembrane segment at 12–28 (FLAVFAYCAALLAFGLY) threads the bilayer. The Periplasmic segment spans residues 29–46 (LQHYQGIEPCPMCIMQRY). Cys38 and Cys41 are joined by a disulfide. The chain crosses the membrane as a helical span at residues 47 to 63 (AFALVGVIALVAGLHGP). Topologically, residues 64-70 (RGAGVRV) are cytoplasmic. Residues 71–87 (YGGLLLLTALAGGSVAA) form a helical membrane-spanning segment. Residues 88 to 143 (RQTWMQLYPPEIPECGPGLEYMLESFPLTSALPMIFRGAGDCSAIDWTFLGLSLAN) lie on the Periplasmic side of the membrane. The cysteines at positions 102 and 129 are disulfide-linked. The helical transmembrane segment at 144–162 (WSLLNFGAAALLALWLLFG) threads the bilayer. Topologically, residues 163–166 (RRVR) are cytoplasmic.

It belongs to the DsbB family.

The protein resides in the cell inner membrane. Its function is as follows. Required for disulfide bond formation in some periplasmic proteins. Acts by oxidizing the DsbA protein. In Azoarcus sp. (strain BH72), this protein is Disulfide bond formation protein B.